Reading from the N-terminus, the 933-residue chain is Exosome complex exonuclease RRP44 homolog A (933 aa).

In terms of domain architecture, PINc spans 50–163 (KIIVVDTNVV…LVTNDRENKR (114 aa)). The 105-residue stretch at 217 to 321 (QEHKPMSEIT…NVDDAPRTSN (105 aa)) folds into the CSD1 domain. Residues 296–336 (AEEDDEEDDTVHLAPDNVDDAPRTSNLSHETSGDKNAAPVR) are disordered. The region spanning 371–438 (ALFVSKDRRI…ETEVVLIEND (68 aa)) is the CSD2 domain. Residues 469–798 (RQDLRHLLVF…FVHRLLAASL (330 aa)) form the RNB domain. The Mg(2+) site is built by D481 and D490.

This sequence belongs to the RNR ribonuclease family. In terms of assembly, probable component of the RNA exosome complex. Mg(2+) serves as cofactor.

It is found in the nucleus. Functionally, catalytic component of the RNA exosome complex which has 3'-&gt;5' exoribonuclease activity and participates in a multitude of cellular RNA processing and degradation events. Required for 5.8S rRNA intermediate processing and the degradation of 5' external transcribed spacer (5' ETS), a maturation by-product of rRNA synthesis. Is not involved in the degradation of turnip crinkle virus (TCV) RNA and significant virus resistance. Required for normal development of female gametophytes and early embryogenesis. The polypeptide is Exosome complex exonuclease RRP44 homolog A (Arabidopsis thaliana (Mouse-ear cress)).